The chain runs to 416 residues: Histidine--tRNA ligase (416 aa).

Belongs to the class-II aminoacyl-tRNA synthetase family. As to quaternary structure, homodimer.

Its subcellular location is the cytoplasm. The catalysed reaction is tRNA(His) + L-histidine + ATP = L-histidyl-tRNA(His) + AMP + diphosphate + H(+). The polypeptide is Histidine--tRNA ligase (Clostridium novyi (strain NT)).